Reading from the N-terminus, the 344-residue chain is MLVLGIESSCDETGLALYDTGAGLLAHALHSQIAMHRDYGGVVPELASRDHIRRVLPLLEQVLADAGRTRQDIDAIAFTQGPGLAGALLVGASVANALGFALNVPMVGVHHLEGHLLSPLLTREPPPFPFVALLVSGGHTQLMEVRGIGDYALLGETLDDAAGEAFDKTAKLLGLGYPGGPEVSRLAEFGVPGAFELPRPMLHSGNLDFSFAGLKTAVLTQTRKLANTCEQDRANLARAFVDAIVDVLVAKSMAALRQTGHKRLVVAGGVGANRQLRERLDQLGRQRKLDVYYPDLAFCTDNGAMIAFAGAMRLQAAPELARREYGYGVTPRWDLADIRLPSAA.

Residues histidine 111 and histidine 115 each coordinate Fe cation. Substrate-binding positions include 134–138, aspartate 167, glycine 180, and asparagine 273; that span reads LVSGG. Residue aspartate 301 participates in Fe cation binding.

Belongs to the KAE1 / TsaD family. The cofactor is Fe(2+).

The protein resides in the cytoplasm. It catalyses the reaction L-threonylcarbamoyladenylate + adenosine(37) in tRNA = N(6)-L-threonylcarbamoyladenosine(37) in tRNA + AMP + H(+). Functionally, required for the formation of a threonylcarbamoyl group on adenosine at position 37 (t(6)A37) in tRNAs that read codons beginning with adenine. Is involved in the transfer of the threonylcarbamoyl moiety of threonylcarbamoyl-AMP (TC-AMP) to the N6 group of A37, together with TsaE and TsaB. TsaD likely plays a direct catalytic role in this reaction. This is tRNA N6-adenosine threonylcarbamoyltransferase from Cupriavidus taiwanensis (strain DSM 17343 / BCRC 17206 / CCUG 44338 / CIP 107171 / LMG 19424 / R1) (Ralstonia taiwanensis (strain LMG 19424)).